A 274-amino-acid chain; its full sequence is Large ribosomal subunit protein uL2c (274 aa).

2 disordered regions span residues 1-22 (MAIH…DSQV) and 225-254 (PVDH…PALG).

This sequence belongs to the universal ribosomal protein uL2 family. As to quaternary structure, part of the 50S ribosomal subunit.

It is found in the plastid. It localises to the chloroplast. The protein is Large ribosomal subunit protein uL2c (rpl2) of Sinapis alba (White mustard).